A 474-amino-acid chain; its full sequence is Alanine/serine racemase (474 aa).

Pyridoxal 5'-phosphate contacts are provided by residues 139–140 (GS) and Q282. At K308 the chain carries N6-(pyridoxal phosphate)lysine. Residue T336 coordinates pyridoxal 5'-phosphate.

The protein belongs to the class-III pyridoxal-phosphate-dependent aminotransferase family. In terms of assembly, homohexamer. It depends on pyridoxal 5'-phosphate as a cofactor.

The enzyme catalyses L-alanine = D-alanine. It carries out the reaction L-serine = D-serine. Completely inhibited by hydroxylamine hydrochloride. Its function is as follows. Catalyzes the interconversion of L-alanine and D-alanine, and L-serine and D-serine. Has weak activity with valine and threonine. The protein is Alanine/serine racemase of Pyrococcus horikoshii (strain ATCC 700860 / DSM 12428 / JCM 9974 / NBRC 100139 / OT-3).